A 157-amino-acid polypeptide reads, in one-letter code: Small ribosomal subunit protein bS16 (157 aa).

Residues Asn114–Glu157 form a disordered region.

It belongs to the bacterial ribosomal protein bS16 family.

The polypeptide is Small ribosomal subunit protein bS16 (Corynebacterium diphtheriae (strain ATCC 700971 / NCTC 13129 / Biotype gravis)).